The following is a 545-amino-acid chain: ATP synthase subunit alpha (545 aa).

ATP is bound at residue Gly-173–Thr-180.

The protein belongs to the ATPase alpha/beta chains family. In terms of assembly, F-type ATPases have 2 components, CF(1) - the catalytic core - and CF(0) - the membrane proton channel. CF(1) has five subunits: alpha(3), beta(3), gamma(1), delta(1), epsilon(1). CF(0) has three main subunits: a(1), b(2) and c(9-12). The alpha and beta chains form an alternating ring which encloses part of the gamma chain. CF(1) is attached to CF(0) by a central stalk formed by the gamma and epsilon chains, while a peripheral stalk is formed by the delta and b chains.

The protein localises to the cell membrane. It carries out the reaction ATP + H2O + 4 H(+)(in) = ADP + phosphate + 5 H(+)(out). Its function is as follows. Produces ATP from ADP in the presence of a proton gradient across the membrane. The alpha chain is a regulatory subunit. This is ATP synthase subunit alpha from Clavibacter sepedonicus (Clavibacter michiganensis subsp. sepedonicus).